The sequence spans 243 residues: Asnovolin H synthase nvfL (243 aa).

Transmembrane regions (helical) follow at residues 20–42 (ANTL…AYYS), 51–71 (ALIP…IHCP), 75–95 (FVRI…YAAI), 112–132 (LPFI…ALAA), 138–160 (IAFV…SQLL), 169–189 (SYVV…MVTI), and 205–225 (LLLW…FCFY).

This sequence belongs to the paxB family.

The protein localises to the membrane. It catalyses the reaction (3R)-[(10S)-11-epoxyfarnesyl]-2,3,5-trimethyl-6-oxido-4-oxocyclohexa-1,5-diene-1-carboxylate + H(+) = asnovolin H. It functions in the pathway secondary metabolite biosynthesis; terpenoid biosynthesis. Functionally, terpene cyclase; part of the gene cluster that mediates the biosynthesis of novofumigatonin, a heavily oxygenated meroterpenoid containing a unique orthoester moiety. The first step of the pathway is the synthesis of 3,5-dimethylorsellinic acid (DMOA) by the polyketide synthase nvfA via condensation of one acetyl-CoA starter unit with 3 malonyl-CoA units and 2 methylations. DMOA is then converted to farnesyl-DMOA by the farnesyltransferase nvfB. Epoxydation by FAD-dependent monooxygenase nvfK, followed by a protonation-initiated cyclization catalyzed by the terpene cyclase nvfL leads to the production of asnavolin H. The short chain dehydrogenase nvfC then as a 3-OH dehydrogenase of asnovolin H to yield chemesin D. There are two branches to synthesize asnovolin A from chemesin D. In one branch, chemesin D undergoes Baeyer-Villiger oxidation by nvfH, methylation by nvfJ, and enoyl reduction by the nvfM D enoylreductase that reduces the double bond between C-5'and C-6', to form respectively asnovolin I, asnovolin K, and asnovolin A. In the other branch, the methylation precedes the Baeyer-Villiger oxidation and the enoyl reduction to yield asnovolin A via the asnovolin J intermediate. Asnovolin A is further converted to fumigatonoid A by the Fe(II)/2-oxoglutarate-dependent dioxygenase nvfI that catalyzes an endoperoxidation reaction. The alpha/beta hydrolase nvfD then acts as an epimerase that converts fumigatonoid A to its C-5' epimer, which then undergoes spontaneous or nvfD-catalyzed lactonization. The following step utilizes the ketoreductase nvfG to produce fumigatonoid B. The dioxygenase nvfE further converts fumigatonoid B into fumigatonoid C. Finally the Fe(II)/2-oxoglutarate-dependent dioxygenase nvfF catalyzes two rounds of oxidation to transform fumigatonoid C into the end product, novofumigatonin A. The chain is Asnovolin H synthase nvfL from Aspergillus novofumigatus (strain IBT 16806).